The following is a 161-amino-acid chain: Nucleotide-binding protein Bmul_0741/BMULJ_02519 (161 aa).

It belongs to the YajQ family.

In terms of biological role, nucleotide-binding protein. In Burkholderia multivorans (strain ATCC 17616 / 249), this protein is Nucleotide-binding protein Bmul_0741/BMULJ_02519.